Consider the following 80-residue polypeptide: CLAVATA3/ESR (CLE)-related protein 4 (80 aa).

The signal sequence occupies residues 1-22; that stretch reads MASFKLWVCLILLLLEFSVHQC. The tract at residues 55-80 is disordered; that stretch reads SKDGQTVLGTLDSKRLSPGGPDPRHH. Residues proline 72 and proline 75 each carry the hydroxyproline modification. Proline 75 carries an O-linked (Ara...) hydroxyproline glycan.

This sequence belongs to the CLV3/ESR signal peptide family. The O-glycosylation (arabinosylation) of the hydroxyproline Pro-75 enhances binding affinity of the CLE4p peptide for its receptor. Expressed in roots and seedlings.

It is found in the secreted. It localises to the extracellular space. In terms of biological role, extracellular signal peptide that regulates cell fate. This chain is CLAVATA3/ESR (CLE)-related protein 4, found in Arabidopsis thaliana (Mouse-ear cress).